An 88-amino-acid chain; its full sequence is Apolipoprotein C-I (88 aa).

Residues 1 to 26 (MRLFLSLPVLVVVLAMVLEGPAPTQA) form the signal peptide.

This sequence belongs to the apolipoprotein C1 family.

It is found in the secreted. Functionally, inhibitor of lipoprotein binding to the low density lipoprotein (LDL) receptor, LDL receptor-related protein, and very low density lipoprotein (VLDL) receptor. Associates with high density lipoproteins (HDL) and the triacylglycerol-rich lipoproteins in the plasma and makes up about 10% of the protein of the VLDL and 2% of that of HDL. Appears to interfere directly with fatty acid uptake and is also the major plasma inhibitor of cholesteryl ester transfer protein (CETP). Binds free fatty acids and reduces their intracellular esterification. Modulates the interaction of APOE with beta-migrating VLDL and inhibits binding of beta-VLDL to the LDL receptor-related protein. The protein is Apolipoprotein C-I (APOC1) of Mirounga angustirostris (Northern elephant seal).